Consider the following 435-residue polypeptide: MVGGKKKTKICDKVSHEEDRISQLPEPLISEILFHLSTKDSVRTSALSTKWRYLWQSVPGLDLDPYASSNTNTIVSFVESFFDSHRDSWIRKLRLDLGYHHDKYDLMSWIDAATTRRIQHLDVHCFHDNKIPLSIYTCTTLVHLRLRWAVLTNPEFVSLPCLKIMHFENVSYPNETTLQKLISGSPVLEELILFSTMYPKGNVLQLRSDTLKRLDINEFIDVVIYAPLLQCLRAKMYSTKNFQIISSGFPAKLDIDFVNTGGRYQKKKVIEDILIDISRVRDLVISSNTWKEFFLYSKSRPLLQFRYISHLNARFYISDLEMLPTLLESCPKLESLILEMVKNQSTRRHGEKREPNVMVSTVPWCLVSSLKFVELKRSIPRYEGEMELVRYVLTNSTVLKKLRLNVYYTKKAKCAFLTELVAIPRCSSTCVVLVL.

Positions 18–64 (EDRISQLPEPLISEILFHLSTKDSVRTSALSTKWRYLWQSVPGLDLD) constitute an F-box domain. LRR repeat units lie at residues 123-148 (VHCF…RLRW), 170-195 (VSYP…ILFS), 234-259 (AKMY…DFVN), 262-287 (GRYQ…VISS), and 314-340 (RFYI…ILEM). Positions 354 to 406 (EPNVMVSTVPWCLVSSLKFVELKRSIPRYEGEMELVRYVLTNSTVLKKLRLNV) constitute an FBD domain.

This Arabidopsis thaliana (Mouse-ear cress) protein is F-box/FBD/LRR-repeat protein At1g51370.